The following is a 249-amino-acid chain: Thioesterase TesA (249 aa).

Active-site residues include Ser-92, Asp-196, and His-224.

It belongs to the thioesterase family.

The catalysed reaction is a fatty acyl-CoA + H2O = a fatty acid + CoA + H(+). Functionally, involved in the synthesis of both phthiocerol dimycocerosates (PDIMs) and phenolic glycolipids (PGLs), which are structurally related lipids non-covalently bound to the outer cell wall layer of M.tuberculosis and are important virulence factors. The sequence is that of Thioesterase TesA from Mycobacterium marinum (strain ATCC BAA-535 / M).